A 1048-amino-acid polypeptide reads, in one-letter code: Putative cation efflux system protein SilA (1048 aa).

The next 14 membrane-spanning stretches (helical) occupy residues 14 to 34, 125 to 145, 338 to 358, 363 to 383, 391 to 411, 446 to 466, 485 to 505, 539 to 559, 737 to 757, 871 to 891, 897 to 917, 928 to 948, 985 to 1005, and 1012 to 1032; these read FLVM…IINT, VSSE…YALV, LSSK…LFLW, ALVA…VMHF, MSLG…IVMI, VGPA…PIFT, SMAG…GFWI, TLLV…QVGG, GMTV…AMVG, KLKL…YLAF, ALLI…FLYW, TGFI…LMYL, AMTV…TGAG, and IAAP…FIIP.

Belongs to the resistance-nodulation-cell division (RND) (TC 2.A.6) family.

The protein resides in the cell inner membrane. In terms of biological role, component of the sil cation-efflux system that confers resistance to silver. May be part of a three-component cation/proton antiporter. In Salmonella typhimurium, this protein is Putative cation efflux system protein SilA (silA).